Here is a 426-residue protein sequence, read N- to C-terminus: Enolase (426 aa).

Gln-162 contacts (2R)-2-phosphoglycerate. Glu-204 (proton donor) is an active-site residue. Mg(2+)-binding residues include Asp-241, Glu-288, and Asp-315. Positions 340, 369, 370, and 391 each coordinate (2R)-2-phosphoglycerate. The active-site Proton acceptor is the Lys-340.

This sequence belongs to the enolase family. It depends on Mg(2+) as a cofactor.

It is found in the cytoplasm. The protein localises to the secreted. The protein resides in the cell surface. It carries out the reaction (2R)-2-phosphoglycerate = phosphoenolpyruvate + H2O. It functions in the pathway carbohydrate degradation; glycolysis; pyruvate from D-glyceraldehyde 3-phosphate: step 4/5. In terms of biological role, catalyzes the reversible conversion of 2-phosphoglycerate (2-PG) into phosphoenolpyruvate (PEP). It is essential for the degradation of carbohydrates via glycolysis. This Bacteroides thetaiotaomicron (strain ATCC 29148 / DSM 2079 / JCM 5827 / CCUG 10774 / NCTC 10582 / VPI-5482 / E50) protein is Enolase.